Here is a 730-residue protein sequence, read N- to C-terminus: Catalase R (730 aa).

Histidine 105 is an active-site residue. Tyrosine 392 lines the heme pocket. Positions 403 to 433 (PNFEQIPVNRPRKPVHNNNRDGFGQQQIPTN) are disordered.

This sequence belongs to the catalase family. It depends on heme as a cofactor.

It catalyses the reaction 2 H2O2 = O2 + 2 H2O. In terms of biological role, occurs in almost all aerobically respiring organisms and serves to protect cells from the toxic effects of hydrogen peroxide. The polypeptide is Catalase R (catR) (Aspergillus niger).